The sequence spans 112 residues: Integration host factor subunit alpha (112 aa).

Belongs to the bacterial histone-like protein family. As to quaternary structure, heterodimer of an alpha and a beta chain.

Its function is as follows. This protein is one of the two subunits of integration host factor, a specific DNA-binding protein that functions in genetic recombination as well as in transcriptional and translational control. The protein is Integration host factor subunit alpha of Agrobacterium fabrum (strain C58 / ATCC 33970) (Agrobacterium tumefaciens (strain C58)).